Reading from the N-terminus, the 269-residue chain is Glutamate racemase (269 aa).

Substrate-binding positions include 7 to 8 (DS) and 39 to 40 (YG). Cys70 (proton donor/acceptor) is an active-site residue. Residue 71–72 (NT) coordinates substrate. Cys194 (proton donor/acceptor) is an active-site residue. 195–196 (TH) is a substrate binding site.

It belongs to the aspartate/glutamate racemases family.

The enzyme catalyses L-glutamate = D-glutamate. The protein operates within cell wall biogenesis; peptidoglycan biosynthesis. In terms of biological role, provides the (R)-glutamate required for cell wall biosynthesis. This is Glutamate racemase from Ruegeria pomeroyi (strain ATCC 700808 / DSM 15171 / DSS-3) (Silicibacter pomeroyi).